The sequence spans 164 residues: ATP synthase subunit b (164 aa).

A helical membrane pass occupies residues 10–30; the sequence is LLISQIVNFCLLAFLLNTFLY.

This sequence belongs to the ATPase B chain family. In terms of assembly, F-type ATPases have 2 components, F(1) - the catalytic core - and F(0) - the membrane proton channel. F(1) has five subunits: alpha(3), beta(3), gamma(1), delta(1), epsilon(1). F(0) has three main subunits: a(1), b(2) and c(10-14). The alpha and beta chains form an alternating ring which encloses part of the gamma chain. F(1) is attached to F(0) by a central stalk formed by the gamma and epsilon chains, while a peripheral stalk is formed by the delta and b chains.

It is found in the cell membrane. Its function is as follows. F(1)F(0) ATP synthase produces ATP from ADP in the presence of a proton or sodium gradient. F-type ATPases consist of two structural domains, F(1) containing the extramembraneous catalytic core and F(0) containing the membrane proton channel, linked together by a central stalk and a peripheral stalk. During catalysis, ATP synthesis in the catalytic domain of F(1) is coupled via a rotary mechanism of the central stalk subunits to proton translocation. In terms of biological role, component of the F(0) channel, it forms part of the peripheral stalk, linking F(1) to F(0). The protein is ATP synthase subunit b of Herpetosiphon aurantiacus (strain ATCC 23779 / DSM 785 / 114-95).